Here is a 370-residue protein sequence, read N- to C-terminus: tRNA 2-selenouridine synthase (370 aa).

The region spanning 12–136 is the Rhodanese domain; that stretch reads FLDDVPMMDM…MRTFLLETTQ (125 aa). Cys95 acts as the S-selanylcysteine intermediate in catalysis.

Belongs to the SelU family. In terms of assembly, monomer.

It catalyses the reaction 5-methylaminomethyl-2-thiouridine(34) in tRNA + selenophosphate + (2E)-geranyl diphosphate + H2O + H(+) = 5-methylaminomethyl-2-selenouridine(34) in tRNA + (2E)-thiogeraniol + phosphate + diphosphate. The enzyme catalyses 5-methylaminomethyl-2-thiouridine(34) in tRNA + (2E)-geranyl diphosphate = 5-methylaminomethyl-S-(2E)-geranyl-thiouridine(34) in tRNA + diphosphate. It carries out the reaction 5-methylaminomethyl-S-(2E)-geranyl-thiouridine(34) in tRNA + selenophosphate + H(+) = 5-methylaminomethyl-2-(Se-phospho)selenouridine(34) in tRNA + (2E)-thiogeraniol. The catalysed reaction is 5-methylaminomethyl-2-(Se-phospho)selenouridine(34) in tRNA + H2O = 5-methylaminomethyl-2-selenouridine(34) in tRNA + phosphate. Functionally, involved in the post-transcriptional modification of the uridine at the wobble position (U34) of tRNA(Lys), tRNA(Glu) and tRNA(Gln). Catalyzes the conversion of 2-thiouridine (S2U-RNA) to 2-selenouridine (Se2U-RNA). Acts in a two-step process involving geranylation of 2-thiouridine (S2U) to S-geranyl-2-thiouridine (geS2U) and subsequent selenation of the latter derivative to 2-selenouridine (Se2U) in the tRNA chain. This Pseudomonas putida (strain GB-1) protein is tRNA 2-selenouridine synthase.